Consider the following 252-residue polypeptide: Small ribosomal subunit protein uS3 (252 aa).

The region spanning 39 to 111 is the KH type-2 domain; that stretch reads IRKLINNFAK…EVNLNVLEVK (73 aa). The segment at 222 to 252 is disordered; it reads KPFASQSSNTPNRRPRNFKGGNNNHVNAKKN. Residues 241–252 show a composition bias toward polar residues; sequence GGNNNHVNAKKN.

Belongs to the universal ribosomal protein uS3 family. In terms of assembly, part of the 30S ribosomal subunit. Forms a tight complex with proteins S10 and S14.

Its function is as follows. Binds the lower part of the 30S subunit head. Binds mRNA in the 70S ribosome, positioning it for translation. This is Small ribosomal subunit protein uS3 from Phytoplasma sp. (strain STRAWB2).